The following is a 91-amino-acid chain: UPF0250 protein Psyr_4360 (91 aa).

It belongs to the UPF0250 family.

The sequence is that of UPF0250 protein Psyr_4360 from Pseudomonas syringae pv. syringae (strain B728a).